Reading from the N-terminus, the 1269-residue chain is Regulator of nonsense transcripts 2 (1269 aa).

2 disordered regions span residues Met1 to Glu125 and Leu143 to Arg162. A coiled-coil region spans residues Lys57–Ala133. Residues Lys94 to Glu132 are sufficient for interaction with UPF1. The 229-residue stretch at Lys168–Lys396 folds into the MIF4G 1 domain. Disordered regions lie at residues Asn422 to Thr444 and Lys487 to Leu518. Composition is skewed to basic and acidic residues over residues Pro427 to Pro438 and Lys487 to Ser511. MIF4G domains are found at residues Gln571–Pro755 and Arg774–Lys984. Residues Gly709–Thr926 form a sufficient for interaction with UPF3A and UPF3B region. Positions Pro755–Arg1269 are sufficient for interaction with EIF4A1 and EIF1. Positions Glu837–Val857 are binds to UPF3B. The segment at Ser1017 to Ala1090 is disordered. Residues Glu1025 to Thr1073 are compositionally biased toward acidic residues. A sufficient for interaction with UPF1 C-terminus region spans residues Lys1081–Arg1269. Thr1085 is subject to Phosphothreonine. Interaction with UPF1 stretches follow at residues Val1102 to Ser1126 and Asp1164 to Glu1204. The tract at residues Val1102–His1195 is necessary for interaction with UPF1. The segment at Glu1218 to Arg1269 is disordered.

In terms of assembly, found in a post-splicing messenger ribonucleoprotein (mRNP) complex. Associates with the exon junction complex (EJC). Interacts with SMG1, EST1A, UPF3A, UPF3B, EIF4A1 and EIF1. Interacts with UPF1; interaction is promoted by TDRD6. Interacts with DDX4. As to expression, localized in male germ cells.

The protein resides in the cytoplasm. Its subcellular location is the perinuclear region. Its function is as follows. Involved in nonsense-mediated decay (NMD) of mRNAs containing premature stop codons by associating with the nuclear exon junction complex (EJC). Recruited by UPF3B associated with the EJC core at the cytoplasmic side of the nuclear envelope and the subsequent formation of an UPF1-UPF2-UPF3 surveillance complex (including UPF1 bound to release factors at the stalled ribosome) is believed to activate NMD. In cooperation with UPF3B stimulates both ATPase and RNA helicase activities of UPF1. Binds spliced mRNA. This Mus musculus (Mouse) protein is Regulator of nonsense transcripts 2.